A 1357-amino-acid polypeptide reads, in one-letter code: DNA-directed RNA polymerase subunit beta (1357 aa).

Belongs to the RNA polymerase beta chain family. In terms of assembly, the RNAP catalytic core consists of 2 alpha, 1 beta, 1 beta' and 1 omega subunit. When a sigma factor is associated with the core the holoenzyme is formed, which can initiate transcription.

It carries out the reaction RNA(n) + a ribonucleoside 5'-triphosphate = RNA(n+1) + diphosphate. Its function is as follows. DNA-dependent RNA polymerase catalyzes the transcription of DNA into RNA using the four ribonucleoside triphosphates as substrates. The sequence is that of DNA-directed RNA polymerase subunit beta from Pseudomonas syringae pv. syringae (strain B728a).